The following is a 544-amino-acid chain: Chaperonin GroEL 1 (544 aa).

ATP-binding positions include 29–32, Lys50, 86–90, Gly414, and Asp494; these read TLGP and DGTTT.

The protein belongs to the chaperonin (HSP60) family. Forms a cylinder of 14 subunits composed of two heptameric rings stacked back-to-back. Interacts with the co-chaperonin GroES.

It is found in the cytoplasm. It catalyses the reaction ATP + H2O + a folded polypeptide = ADP + phosphate + an unfolded polypeptide.. Its function is as follows. Together with its co-chaperonin GroES, plays an essential role in assisting protein folding. The GroEL-GroES system forms a nano-cage that allows encapsulation of the non-native substrate proteins and provides a physical environment optimized to promote and accelerate protein folding. The sequence is that of Chaperonin GroEL 1 from Psychromonas ingrahamii (strain DSM 17664 / CCUG 51855 / 37).